The following is a 613-amino-acid chain: Sulfhydryl oxidase 1 (613 aa).

An N-terminal signal peptide occupies residues 1 to 30; it reads MTGCGRRSGWLPPLRLLLLPLLLGGPGVGA. The Thioredoxin domain occupies 37-157; sequence YSASDPLTLL…RERLIDALES (121 aa). Active-site nucleophile residues include C71 and C74. 2 cysteine pairs are disulfide-bonded: C71-C74 and C102-C111. 2 N-linked (GlcNAc...) asparagine glycosylation sites follow: N131 and N244. A disulfide bridge connects residues C394 and C406. The 108-residue stretch at 397 to 504 folds into the ERV/ALR sulfhydryl oxidase domain; the sequence is SESHFRGFPC…EDPQFPKVQW (108 aa). R402, W409, and H413 together coordinate FAD. S427 carries the phosphoserine modification. Residues C450 and C453 are joined by a disulfide bond. Residues D452, H456, 479–486, K501, and W504 contribute to the FAD site; that span reads WTSHNRVN. C510 and C513 form a disulfide bridge.

Belongs to the quiescin-sulfhydryl oxidase (QSOX) family. As to quaternary structure, monomer. Requires FAD as cofactor. Post-translationally, N-glycosylated. O-glycosylated on Thr and Ser residues. As to expression, detected in endometrium and in uterus glandular epithelial cells (at protein level). Expressed in testis, placenta, pancreas, lung, ovary, endometrium, but not in brain, liver and kidney tissues. Higher expression in epithelial cells.

It is found in the secreted. The enzyme catalyses 2 R'C(R)SH + O2 = R'C(R)S-S(R)CR' + H2O2. Functionally, catalyzes the oxidation of sulfhydryl groups in peptide and protein thiols to disulfides with the reduction of oxygen to hydrogen peroxide. Plays a role in disulfide bond formation in a variety of extracellular proteins. In fibroblasts, required for normal incorporation of laminin into the extracellular matrix, and thereby for normal cell-cell adhesion and cell migration. This is Sulfhydryl oxidase 1 (QSOX1) from Cavia porcellus (Guinea pig).